The chain runs to 555 residues: Phosphoglucomutase (555 aa).

Substrate is bound by residues Thr45, Arg49, 148 to 149 (SH), and Lys158. Ser148 functions as the Phosphoserine intermediate in the catalytic mechanism. Ser148 lines the Mg(2+) pocket. Residues Asp306, Asp308, and Asp310 each coordinate Mg(2+). Residues 310–311 (DR) and 393–395 (EES) each bind substrate.

Belongs to the phosphohexose mutase family. Mg(2+) is required as a cofactor.

It carries out the reaction alpha-D-glucose 1-phosphate = alpha-D-glucose 6-phosphate. Its function is as follows. This enzyme participates in both the breakdown and synthesis of glucose. The sequence is that of Phosphoglucomutase (celB) from Komagataeibacter xylinus (Gluconacetobacter xylinus).